A 214-amino-acid polypeptide reads, in one-letter code: MTGTFITFEGPDGAGKTSVLKTLIPQLEQHVRVPLHLTREPGGAKISETIREVILDPANTAMDARTEALLYAASRRQHLVEVIQPALAQGDIVVCDRFVDSSVAYQGGGREIGPDAVLKMNQFATAGLEPALTLYLDVPVQVGLDRIKSHQNERQYDRLDQESLAFHERVHDAYMTLIVDNPQRIVSIDATEPLEKVVAACFQTITRRFPELFN.

An ATP-binding site is contributed by glycine 10–threonine 17.

This sequence belongs to the thymidylate kinase family.

The catalysed reaction is dTMP + ATP = dTDP + ADP. Its function is as follows. Phosphorylation of dTMP to form dTDP in both de novo and salvage pathways of dTTP synthesis. The sequence is that of Thymidylate kinase from Lacticaseibacillus casei (strain BL23) (Lactobacillus casei).